A 260-amino-acid polypeptide reads, in one-letter code: Proansamycin X synthase (260 aa).

Cys-73 functions as the Acyl-thioester intermediate in the catalytic mechanism. Active-site residues include His-111 and Asp-126.

Belongs to the arylamine N-acetyltransferase family.

It participates in antibiotic biosynthesis; rifamycin B biosynthesis. In terms of biological role, catalyzes the release of the completed linear polyketide from the rif PKS by forming an intramolecular amide bond, in this way terminating polyketide assembly and forming the macrocyclic compound proansamycin X, an intermediate in the rifamycin B biosynthesis. In Amycolatopsis mediterranei (strain S699) (Nocardia mediterranei), this protein is Proansamycin X synthase (rifF).